Reading from the N-terminus, the 809-residue chain is Chloride channel protein F (809 aa).

Residues Met1 to Asn65 lie on the Cytoplasmic side of the membrane. A run of 11 helical transmembrane segments spans residues Phe66 to Val86, Leu110 to Ile130, Phe152 to Leu172, Ala218 to Phe238, Phe246 to Ile266, Leu295 to Leu315, Ile333 to Leu353, Gly395 to Ile415, Ile425 to Leu445, Val459 to Ile479, and Leu486 to Leu506. The region spanning Met539 to Leu597 is the CBS 1 domain. Disordered regions lie at residues Pro604 to Asn646 and Asn692 to Ser729. The segment covering Asn620 to Asn646 has biased composition (low complexity). One can recognise a CBS 2 domain in the interval Ile756 to His809.

Belongs to the chloride channel (TC 2.A.49) family.

It localises to the membrane. Its function is as follows. Voltage-gated chloride channel. Chloride channels may have several functions including the regulation of cell volume, membrane potential stabilization and signal transduction. In Dictyostelium discoideum (Social amoeba), this protein is Chloride channel protein F (clcF).